Reading from the N-terminus, the 216-residue chain is Ras-related protein Rab-5C (216 aa).

10 residues coordinate GTP: Ser-30, Ala-31, Gly-33, Lys-34, Ser-35, Ser-36, His-47, Glu-48, Thr-53, and Gly-79. Position 35 (Ser-35) interacts with Mg(2+). Short sequence motifs (switch) lie at residues 45–57 and 78–94; these read QFHE…IGAA and AGQE…YRGA. Thr-53 is a binding site for Mg(2+). Residue Ser-85 is modified to Phosphoserine; by LRRK2. Residues Asn-134, Lys-135, Asp-137, Ala-165, and Lys-166 each coordinate GTP. Residues 185–216 form a disordered region; the sequence is NEPQNATGAPGRNRGVDLQENNPASRSQCCSN. The span at 203 to 216 shows a compositional bias: polar residues; it reads QENNPASRSQCCSN. 2 S-geranylgeranyl cysteine lipidation sites follow: Cys-213 and Cys-214.

The protein belongs to the small GTPase superfamily. Rab family. Interacts with EEA1. Interacts with INCA1. Interacts with GDI1, GDI2, CHML and CHM; phosphorylation at Ser-85 disrupts this interaction. It depends on Mg(2+) as a cofactor. In terms of processing, phosphorylation of Ser-85 in the switch II region by LRRK2 prevents the association of RAB regulatory proteins, including CHM, CHML and RAB GDP dissociation inhibitors GDI1 and GDI2. Post-translationally, (Microbial infection) Glycosylated on arginine residues by S.typhimurium protein Ssek3.

It is found in the cell membrane. Its subcellular location is the early endosome membrane. The protein resides in the melanosome. The catalysed reaction is GTP + H2O = GDP + phosphate + H(+). Regulated by guanine nucleotide exchange factors (GEFs) which promote the exchange of bound GDP for free GTP. Regulated by GTPase activating proteins (GAPs) which increase the GTP hydrolysis activity. Inhibited by GDP dissociation inhibitors (GDIs). Its function is as follows. The small GTPases Rab are key regulators of intracellular membrane trafficking, from the formation of transport vesicles to their fusion with membranes. Rabs cycle between an inactive GDP-bound form and an active GTP-bound form that is able to recruit to membranes different sets of downstream effectors directly responsible for vesicle formation, movement, tethering and fusion. The polypeptide is Ras-related protein Rab-5C (Homo sapiens (Human)).